The sequence spans 184 residues: ATP synthase subunit b 1 (184 aa).

The helical transmembrane segment at 4-24 (LSILAVLAASPAMAATGPFLS) threads the bilayer.

The protein belongs to the ATPase B chain family. F-type ATPases have 2 components, F(1) - the catalytic core - and F(0) - the membrane proton channel. F(1) has five subunits: alpha(3), beta(3), gamma(1), delta(1), epsilon(1). F(0) has three main subunits: a(1), b(2) and c(10-14). The alpha and beta chains form an alternating ring which encloses part of the gamma chain. F(1) is attached to F(0) by a central stalk formed by the gamma and epsilon chains, while a peripheral stalk is formed by the delta and b chains.

Its subcellular location is the cell inner membrane. In terms of biological role, f(1)F(0) ATP synthase produces ATP from ADP in the presence of a proton or sodium gradient. F-type ATPases consist of two structural domains, F(1) containing the extramembraneous catalytic core and F(0) containing the membrane proton channel, linked together by a central stalk and a peripheral stalk. During catalysis, ATP synthesis in the catalytic domain of F(1) is coupled via a rotary mechanism of the central stalk subunits to proton translocation. Its function is as follows. Component of the F(0) channel, it forms part of the peripheral stalk, linking F(1) to F(0). This chain is ATP synthase subunit b 1, found in Cereibacter sphaeroides (strain ATCC 17023 / DSM 158 / JCM 6121 / CCUG 31486 / LMG 2827 / NBRC 12203 / NCIMB 8253 / ATH 2.4.1.) (Rhodobacter sphaeroides).